The sequence spans 387 residues: MSNEMYYVQASDPAILEKGECGGAVTALFKYLLDKGIVDGVLALKKGVDVYDAIPTFVTSSEDLLSTAGSLHCAPTMWGGIIKEYLQDAKIAVPVKPCDMRAIVELAKRAQINLDNVYMIGLNCGGTVPPKTAMEMIKLFYEVDPKDVVKEEIDKGKFIIVMKDGSHKEVKMHDLEDNGYGRRVNCQRCDEKIPRKADIAAGNWGVIGEDAGKYTFMEVCTEKGKQLLKDAEKDGYVKTKAPNPKGLEIRAKVESSMLKMGEDYKNKWLEEKYPTIEEWNRQWNKCIKCYGCRDVCPVCFCRECALTADYVDTGSIPPDPIMFQGVRMSHMAFSCVNCGQCEDVCPMEIPVARIFHKIQEKTRKELGYRPGVDDEAPPALGGSCPTQ.

2 4Fe-4S ferredoxin-type domains span residues 275-298 (TIEE…VCPV) and 326-355 (VRMS…ARIF). Residues C286, C289, C292, C296, C335, C338, C341, and C345 each contribute to the [4Fe-4S] cluster site. The segment at 366–387 (LGYRPGVDDEAPPALGGSCPTQ) is disordered.

The protein belongs to the FrhB family. Dimer of an alpha (FdhA1) and a beta (FdhB1) subunit. It depends on [4Fe-4S] cluster as a cofactor. Requires FAD as cofactor. Zn(2+) is required as a cofactor.

The enzyme catalyses oxidized coenzyme F420-(gamma-L-Glu)(n) + formate + 2 H(+) = reduced coenzyme F420-(gamma-L-Glu)(n) + CO2. In terms of biological role, catalyzes the oxidation of formate to carbon dioxide, with coenzyme F420 as the electron acceptor. In vitro can also use methyl viologen as electron acceptor. In Methanococcus maripaludis (strain DSM 14266 / JCM 13030 / NBRC 101832 / S2 / LL), this protein is F420-dependent formate dehydrogenase 1 subunit beta.